The chain runs to 145 residues: Deoxyuridine 5'-triphosphate nucleotidohydrolase (145 aa).

Substrate is bound by residues 62 to 64 (RSG), asparagine 75, and 79 to 81 (TVD).

The protein belongs to the dUTPase family. Mg(2+) is required as a cofactor.

It catalyses the reaction dUTP + H2O = dUMP + diphosphate + H(+). The protein operates within pyrimidine metabolism; dUMP biosynthesis; dUMP from dCTP (dUTP route): step 2/2. Functionally, this enzyme is involved in nucleotide metabolism: it produces dUMP, the immediate precursor of thymidine nucleotides and it decreases the intracellular concentration of dUTP so that uracil cannot be incorporated into DNA. The protein is Deoxyuridine 5'-triphosphate nucleotidohydrolase of Gloeothece citriformis (strain PCC 7424) (Cyanothece sp. (strain PCC 7424)).